The chain runs to 172 residues: MVDKRESYTKEDLEASGRGELFGAGGPPLPAGNMLMMDRVVKMTEDGGTYGKGYVEAELDINPDLWFFGCHFIGDPVMPGCLGLDAMWQLVGFYLGWLGGEGKGRALGVGEVKFTGQVLPDAKKVTYRINFKRIIMRKLIMGVADGEVLVDGKVIYTATDLKVGLFKDTNAF.

His-71 is an active-site residue.

This sequence belongs to the thioester dehydratase family. FabA subfamily. Homodimer.

Its subcellular location is the cytoplasm. The catalysed reaction is a (3R)-hydroxyacyl-[ACP] = a (2E)-enoyl-[ACP] + H2O. It catalyses the reaction (3R)-hydroxydecanoyl-[ACP] = (2E)-decenoyl-[ACP] + H2O. The enzyme catalyses (2E)-decenoyl-[ACP] = (3Z)-decenoyl-[ACP]. It functions in the pathway lipid metabolism; fatty acid biosynthesis. Its function is as follows. Necessary for the introduction of cis unsaturation into fatty acids. Catalyzes the dehydration of (3R)-3-hydroxydecanoyl-ACP to E-(2)-decenoyl-ACP and then its isomerization to Z-(3)-decenoyl-ACP. Can catalyze the dehydratase reaction for beta-hydroxyacyl-ACPs with saturated chain lengths up to 16:0, being most active on intermediate chain length. In Yersinia enterocolitica serotype O:8 / biotype 1B (strain NCTC 13174 / 8081), this protein is 3-hydroxydecanoyl-[acyl-carrier-protein] dehydratase.